The chain runs to 264 residues: Apolipoprotein A-I (264 aa).

Residues 1–18 (MKAVVLAVALVFLTGSQA) form the signal peptide. A run of 2 repeats spans residues 67–88 (LNLL…ERLG) and 89–110 (PLTR…QEMN). A 10 X approximate tandem repeats region spans residues 67-264 (LNLLENWDTL…DKARETLTAQ (198 aa)). Position 109 is a methionine sulfoxide (Met109). Residues 111–121 (KDLEEVKQNVQ) form a 3; half-length repeat. 3 consecutive repeat copies span residues 122-143 (PYLD…QRVA), 144-165 (PLGA…GKLS), and 166-187 (PVAE…TQLA). One copy of the 7; truncated repeat lies at 188–207 (PHSDKLRESLAQRLAELKSN). Repeat 8 spans residues 208 to 229 (PTLNEYHTRAKTHLNTFGEKAR). One copy of the 9; half-length repeat lies at 230–240 (PALEDLRHTLI). Residues 241 to 264 (PILDTLKTKVKSVIDKARETLTAQ) form repeat 10.

Belongs to the apolipoprotein A1/A4/E family. As to quaternary structure, homodimer. Interacts with APOA1BP and CLU. Component of a sperm activating protein complex (SPAP), consisting of APOA1, an immunoglobulin heavy chain, an immunoglobulin light chain and albumin. Interacts with NDRG1. Interacts with SCGB3A2. Interacts with NAXE and YJEFN3. In terms of processing, glycosylated. Post-translationally, palmitoylated. Phosphorylation sites are present in the extracellular medium.

Its subcellular location is the secreted. Functionally, participates in the reverse transport of cholesterol from tissues to the liver for excretion by promoting cholesterol efflux from tissues and by acting as a cofactor for the lecithin cholesterol acyltransferase (LCAT). As part of the SPAP complex, activates spermatozoa motility. This Mus pahari (Gairdner's shrew-mouse) protein is Apolipoprotein A-I (Apoa1).